Reading from the N-terminus, the 427-residue chain is GTPase Obg (427 aa).

The Obg domain maps to 1–158 (MFVDKVKVYV…RDVILELKVL (158 aa)). The tract at residues 118–144 (KGGRGGRGNTRFATPANPAPELSENGE) is disordered. The 171-residue stretch at 159-329 (ADAGLVGFPS…LLRAIMDTIE (171 aa)) folds into the OBG-type G domain. Residues 165–172 (GFPSVGKS), 190–194 (FTTIT), 212–215 (DLPG), 282–285 (NKMD), and 310–312 (SAL) each bind GTP. S172 and T192 together coordinate Mg(2+). In terms of domain architecture, OCT spans 349–427 (KHDKEQDPFV…LLEFEFEFIE (79 aa)).

It belongs to the TRAFAC class OBG-HflX-like GTPase superfamily. OBG GTPase family. In terms of assembly, monomer. Requires Mg(2+) as cofactor.

It localises to the cytoplasm. In terms of biological role, an essential GTPase which binds GTP, GDP and possibly (p)ppGpp with moderate affinity, with high nucleotide exchange rates and a fairly low GTP hydrolysis rate. Plays a role in control of the cell cycle, stress response, ribosome biogenesis and in those bacteria that undergo differentiation, in morphogenesis control. The sequence is that of GTPase Obg from Halalkalibacterium halodurans (strain ATCC BAA-125 / DSM 18197 / FERM 7344 / JCM 9153 / C-125) (Bacillus halodurans).